The following is a 255-amino-acid chain: Pyrroloquinoline-quinone synthase (255 aa).

This sequence belongs to the PqqC family.

It carries out the reaction 6-(2-amino-2-carboxyethyl)-7,8-dioxo-1,2,3,4,7,8-hexahydroquinoline-2,4-dicarboxylate + 3 O2 = pyrroloquinoline quinone + 2 H2O2 + 2 H2O + H(+). It participates in cofactor biosynthesis; pyrroloquinoline quinone biosynthesis. In terms of biological role, ring cyclization and eight-electron oxidation of 3a-(2-amino-2-carboxyethyl)-4,5-dioxo-4,5,6,7,8,9-hexahydroquinoline-7,9-dicarboxylic-acid to PQQ. The sequence is that of Pyrroloquinoline-quinone synthase from Granulibacter bethesdensis (strain ATCC BAA-1260 / CGDNIH1).